The chain runs to 142 residues: MKVGGIEDRQLEALKRAALKACELSYSPYSHFRVGCSILTNNDVIFTGANVENASYSNCICAERSAMIQVLMAGHRSGWKCMVICGDSEDQCVSPCGVCRQFINEFVVKDFPIVMLNSTGSRSKVMTMGELLPMAFGPSHLN.

The 131-residue stretch at 9 to 139 folds into the CMP/dCMP-type deaminase domain; sequence RQLEALKRAA…ELLPMAFGPS (131 aa). 50–52 is a substrate binding site; the sequence is NVE. Cysteine 61 serves as a coordination point for Zn(2+). The Proton donor role is filled by glutamate 63. Zn(2+)-binding residues include cysteine 96 and cysteine 99.

The protein belongs to the cytidine and deoxycytidylate deaminase family. Homodimer. It depends on Zn(2+) as a cofactor.

The enzyme catalyses cytidine + H2O + H(+) = uridine + NH4(+). It carries out the reaction 2'-deoxycytidine + H2O + H(+) = 2'-deoxyuridine + NH4(+). In terms of biological role, this enzyme scavenges exogenous and endogenous cytidine and 2'-deoxycytidine for UMP synthesis. This Saccharomyces cerevisiae (strain ATCC 204508 / S288c) (Baker's yeast) protein is Cytidine deaminase (CDD1).